The chain runs to 790 residues: Protein sel-1 homolog 1 (790 aa).

The first 21 residues, 1–21 (MQVRVRLSLLLLCAVLLGSAA), serve as a signal peptide directing secretion. Residues 22-51 (ATSDDKTNQDDSLDSKSSLPTDESVKDHTT) are disordered. Over 22-734 (ATSDDKTNQD…LFTQLDMDQL (713 aa)) the chain is Lumenal. The segment at 23 to 733 (TSDDKTNQDD…DLFTQLDMDQ (711 aa)) is interaction with ERLEC1, OS9 and SYVN1. Serine 64 is modified (phosphoserine). The span at 67-78 (AEVESLLQDEED) shows a compositional bias: acidic residues. A disordered region spans residues 67–98 (AEVESLLQDEEDSSKTQEEEISFLESPNPSSK). In terms of domain architecture, Fibronectin type-II spans 118-166 (AHGEPCHFPFLFLDKEYDECTSDGREDGRLWCATTYDYKTDEKWGFCET). Intrachain disulfides connect cysteine 123–cysteine 149 and cysteine 137–cysteine 164. 9 Sel1-like repeats span residues 179 to 214 (AEMI…GMNH), 215 to 250 (TKAL…EEGS), 251 to 286 (PKGQ…LGGN), 287 to 322 (LIAH…NHVA), 369 to 405 (VQAQ…NAGN), 406 to 442 (SHAM…DMGN), 443 to 478 (PVGQ…EQGW), 479 to 514 (VDGQ…QGGH), and 515 to 550 (ILAF…ERGR). Asparagine 191 and asparagine 213 each carry an N-linked (GlcNAc...) asparagine glycan. A glycan (N-linked (GlcNAc...) asparagine) is linked at asparagine 268. The important for homodimerization and oligomerization stretch occupies residues 348–533 (NSGMLEEDLI…MHASGTGVMR (186 aa)). Asparagine 427 carries an N-linked (GlcNAc...) asparagine glycan. An N-linked (GlcNAc...) asparagine glycan is attached at asparagine 604. 2 Sel1-like repeats span residues 623–658 (TVAR…EQQH) and 660–695 (AQAM…EASP). The segment at 639–719 (TDVDYETAFI…VVYFLQYIRE (81 aa)) is interaction with SYVN1. A mediates retention in the endoplasmic reticulum region spans residues 734–790 (LLGPEWDLYLMTIIALLLGTVIAYRQRQHQDIPVPRPPGPRPAPPQQEGPPEQQPPQ). A helical membrane pass occupies residues 735-755 (LGPEWDLYLMTIIALLLGTVI). Residues 756–790 (AYRQRQHQDIPVPRPPGPRPAPPQQEGPPEQQPPQ) are Cytoplasmic-facing. The tract at residues 763–790 (QDIPVPRPPGPRPAPPQQEGPPEQQPPQ) is disordered. Residues 767 to 790 (VPRPPGPRPAPPQQEGPPEQQPPQ) show a composition bias toward pro residues.

The protein belongs to the sel-1 family. Homodimer and homooligomer. May form a complex with ERLEC1, HSPA5, OS9, and SYVN1. Interacts with FOXRED2 and EDEM1. Interacts with LPL and LMF1; may stabilize the complex formed by LPL and LMF1 and thereby promote the export of LPL dimers. Component of the HRD1 complex, which comprises at least SYNV1/HRD1, DERL1/2, FAM8A1, HERPUD1/HERP, OS9, SEL1L and UBE2J1. SYNV1 assembles with SEL1L and FAM8A1 through its transmembrane domains, but interaction with its cytoplasmic domain is required to confer stability to FAM8A1 and enhance recruitment of HERPUD1. The interaction with SYNV1/HRD1 is direct. In terms of processing, N-glycosylated. In terms of tissue distribution, highly expressed in pancreas, white adipose tissue, liver and spleen (at protein level). Detected in heart, brain, spleen, lung, liver, kidney and testis.

Its subcellular location is the endoplasmic reticulum membrane. Its function is as follows. Plays a role in the endoplasmic reticulum quality control (ERQC) system also called ER-associated degradation (ERAD) involved in ubiquitin-dependent degradation of misfolded endoplasmic reticulum proteins. Enhances SYVN1 stability. Plays a role in LPL maturation and secretion. Required for normal differentiation of the pancreas epithelium, and for normal exocrine function and survival of pancreatic cells. May play a role in Notch signaling. This chain is Protein sel-1 homolog 1 (Sel1l), found in Mus musculus (Mouse).